The primary structure comprises 57 residues: IKWFNSEKGFGFIEVEGQDDVFVHFSAIQGEGFKCLEEGQAVSFEIVEGNRGPQAAN.

The CSD domain maps to 1-57; the sequence is IKWFNSEKGFGFIEVEGQDDVFVHFSAIQGEGFKCLEEGQAVSFEIVEGNRGPQAAN.

Homodimer.

It localises to the cytoplasm. Affects cell viability at low temperatures. The sequence is that of Cold shock protein CspB (cspB) from Sporosarcina globispora (Bacillus globisporus).